Consider the following 699-residue polypeptide: UvrABC system protein B (699 aa).

The 154-residue stretch at 35-188 (ERINNGEKDV…DHLLRKFVSM (154 aa)) folds into the Helicase ATP-binding domain. Residue 48-55 (GATGTGKS) participates in ATP binding. The Beta-hairpin signature appears at 101–124 (YYDYYQPEAYVAQTDTFIEKDSSI). A Helicase C-terminal domain is found at 438 to 604 (QIDDLLGEIR…PLRKKIADIT (167 aa)). Residues 654-689 (VGLIEQLTEQMHGAAAELQFEVAARIRDEVKELKRE) form the UVR domain.

The protein belongs to the UvrB family. As to quaternary structure, forms a heterotetramer with UvrA during the search for lesions. Interacts with UvrC in an incision complex.

It is found in the cytoplasm. The UvrABC repair system catalyzes the recognition and processing of DNA lesions. A damage recognition complex composed of 2 UvrA and 2 UvrB subunits scans DNA for abnormalities. Upon binding of the UvrA(2)B(2) complex to a putative damaged site, the DNA wraps around one UvrB monomer. DNA wrap is dependent on ATP binding by UvrB and probably causes local melting of the DNA helix, facilitating insertion of UvrB beta-hairpin between the DNA strands. Then UvrB probes one DNA strand for the presence of a lesion. If a lesion is found the UvrA subunits dissociate and the UvrB-DNA preincision complex is formed. This complex is subsequently bound by UvrC and the second UvrB is released. If no lesion is found, the DNA wraps around the other UvrB subunit that will check the other stand for damage. This is UvrABC system protein B from Paenarthrobacter aurescens (strain TC1).